Reading from the N-terminus, the 262-residue chain is Expansin-A13 (262 aa).

Residues 1-22 form the signal peptide; sequence MAGVARMLAAVVCAIMPAAAMA. One can recognise an Expansin-like EG45 domain in the interval 52-167; that stretch reads GGACGYGNLY…QRVPCMKKGG (116 aa). The Expansin-like CBD domain occupies 177-257; sequence YFQLVLLTNV…GWRFGQTFAS (81 aa).

The protein belongs to the expansin family. Expansin A subfamily. As to expression, expressed in roots and flowers.

The protein resides in the secreted. The protein localises to the cell wall. It is found in the membrane. Functionally, may cause loosening and extension of plant cell walls by disrupting non-covalent bonding between cellulose microfibrils and matrix glucans. No enzymatic activity has been found. May be required for rapid internodal elongation in deepwater rice during submergence. This Oryza sativa subsp. japonica (Rice) protein is Expansin-A13 (EXPA13).